The chain runs to 418 residues: Phosphopentomutase (418 aa).

Mn(2+) is bound by residues aspartate 10, aspartate 297, histidine 302, aspartate 338, histidine 339, and histidine 350.

It belongs to the phosphopentomutase family. Mn(2+) serves as cofactor.

It localises to the cytoplasm. It catalyses the reaction 2-deoxy-alpha-D-ribose 1-phosphate = 2-deoxy-D-ribose 5-phosphate. The enzyme catalyses alpha-D-ribose 1-phosphate = D-ribose 5-phosphate. The protein operates within carbohydrate degradation; 2-deoxy-D-ribose 1-phosphate degradation; D-glyceraldehyde 3-phosphate and acetaldehyde from 2-deoxy-alpha-D-ribose 1-phosphate: step 1/2. In terms of biological role, isomerase that catalyzes the conversion of deoxy-ribose 1-phosphate (dRib-1-P) and ribose 1-phosphate (Rib-1-P) to deoxy-ribose 5-phosphate (dRib-5-P) and ribose 5-phosphate (Rib-5-P), respectively. This is Phosphopentomutase from Chromohalobacter salexigens (strain ATCC BAA-138 / DSM 3043 / CIP 106854 / NCIMB 13768 / 1H11).